The chain runs to 438 residues: MSLSVSRRLAAVTAFAVAGLFASAVPAALAAPSAVAAAPTPPDIPLANVKAHLSQLSTIAANNGGNRAHGRAGYKASIDYVKGKLDAAGFTTTLQTFTSSGATGYNLIADWPGGDPNSVLMAGSHLDSVTSGAGINDNGSGSAAVLETALAVSRAGLQPTKHLRFGWWGAEELGLIGSKYYVNNLPAAEKAKISGYLNFDMIGSPNPGYFVYDDDPTIEQTFKNYYAGLGVPTEIETEGDGRSDHAPFKNAGIPVGGLFSGADYTKTAAQAQKWGGTSGQAFDRCYHSSCDSLTNINDTALDRNSDAVAYAIWTLGAGTPVPPGQSFENTADVNVPDSPAAAVSSPITVSGVTGNAPATTKVDVNIVHTYRGDLVVDLVAPDGTVYNLHNRSGGSADNLVQTYTVNASSEVANGVWNLRVKDTAAQDVGYINSWKITF.

An N-terminal signal peptide occupies residues 1 to 37 (MSLSVSRRLAAVTAFAVAGLFASAVPAALAAPSAVAA). Positions 125 and 137 each coordinate Zn(2+). The active-site Proton acceptor is the glutamate 171. 3 residues coordinate Zn(2+): glutamate 172, aspartate 200, and histidine 287. A disulfide bridge connects residues cysteine 285 and cysteine 290. The region spanning 321–438 (VPPGQSFENT…GYINSWKITF (118 aa)) is the P/Homo B domain.

This sequence belongs to the peptidase M28 family. M28A subfamily. In terms of assembly, monomer. The cofactor is Zn(2+).

It is found in the secreted. Activity is inhibited by metalloprotease inhibitors and activated by Mg(2+) and Ca(2+). Functionally, a leucine-specific metalloprotease that plays a role in controlling the amount of leupeptin during colony development. Degrades leupeptin into three components, acetyl-leucine, leucine and argininal. Has a strict preference for leucine at the P1 site. The chain is Leupeptin-inactivating enzyme 1 (lieA) from Streptomyces exfoliatus (Streptomyces hydrogenans).